The chain runs to 376 residues: uncharacterized protein (376 aa).

The next 2 membrane-spanning stretches (helical) occupy residues 153–173 and 188–208; these read QGTL…VLFA and HRPF…LAVY.

Its subcellular location is the membrane. This is an uncharacterized protein from Saccharomyces cerevisiae (strain ATCC 204508 / S288c) (Baker's yeast).